The sequence spans 354 residues: Methionine import ATP-binding protein MetN (354 aa).

One can recognise an ABC transporter domain in the interval 8–250; it reads LDHIDITFRQ…PKEALTQKFI (243 aa). 42 to 49 is a binding site for ATP; it reads GYSGAGKS.

It belongs to the ABC transporter superfamily. Methionine importer (TC 3.A.1.24) family. The complex is composed of two ATP-binding proteins (MetN), two transmembrane proteins (MetI) and a solute-binding protein (MetQ).

The protein localises to the cell membrane. It carries out the reaction L-methionine(out) + ATP + H2O = L-methionine(in) + ADP + phosphate + H(+). It catalyses the reaction D-methionine(out) + ATP + H2O = D-methionine(in) + ADP + phosphate + H(+). Its function is as follows. Part of the ABC transporter complex MetNIQ involved in methionine import. Responsible for energy coupling to the transport system. This chain is Methionine import ATP-binding protein MetN, found in Streptococcus pyogenes serotype M18 (strain MGAS8232).